The sequence spans 435 residues: ATP-dependent protease ATPase subunit HslU (435 aa).

ATP is bound by residues I18, 60-65 (GVGKTE), D248, E313, and R385.

This sequence belongs to the ClpX chaperone family. HslU subfamily. As to quaternary structure, a double ring-shaped homohexamer of HslV is capped on each side by a ring-shaped HslU homohexamer. The assembly of the HslU/HslV complex is dependent on binding of ATP.

The protein localises to the cytoplasm. ATPase subunit of a proteasome-like degradation complex; this subunit has chaperone activity. The binding of ATP and its subsequent hydrolysis by HslU are essential for unfolding of protein substrates subsequently hydrolyzed by HslV. HslU recognizes the N-terminal part of its protein substrates and unfolds these before they are guided to HslV for hydrolysis. The polypeptide is ATP-dependent protease ATPase subunit HslU (Rhizobium meliloti (strain 1021) (Ensifer meliloti)).